The following is a 474-amino-acid chain: Glutamyl-tRNA(Gln) amidotransferase subunit A (474 aa).

Catalysis depends on charge relay system residues Lys76 and Ser151. The Acyl-ester intermediate role is filled by Ser175.

The protein belongs to the amidase family. GatA subfamily. In terms of assembly, heterotrimer of A, B and C subunits.

The catalysed reaction is L-glutamyl-tRNA(Gln) + L-glutamine + ATP + H2O = L-glutaminyl-tRNA(Gln) + L-glutamate + ADP + phosphate + H(+). Allows the formation of correctly charged Gln-tRNA(Gln) through the transamidation of misacylated Glu-tRNA(Gln) in organisms which lack glutaminyl-tRNA synthetase. The reaction takes place in the presence of glutamine and ATP through an activated gamma-phospho-Glu-tRNA(Gln). This Chlorobium chlorochromatii (strain CaD3) protein is Glutamyl-tRNA(Gln) amidotransferase subunit A.